We begin with the raw amino-acid sequence, 298 residues long: Glutamyl-Q tRNA(Asp) synthetase (298 aa).

Residues 12–16 (RFAPT) and Glu-48 each bind L-glutamate. Positions 15–25 (PTPSGYLHFGS) match the 'HIGH' region motif. 4 residues coordinate Zn(2+): Cys-104, Cys-106, Tyr-118, and Cys-122. Residues Tyr-175 and Arg-193 each coordinate L-glutamate. The 'KMSKS' region motif lies at 231–235 (KLGKS). Lys-234 contributes to the ATP binding site.

This sequence belongs to the class-I aminoacyl-tRNA synthetase family. GluQ subfamily. The cofactor is Zn(2+).

Its function is as follows. Catalyzes the tRNA-independent activation of glutamate in presence of ATP and the subsequent transfer of glutamate onto a tRNA(Asp). Glutamate is transferred on the 2-amino-5-(4,5-dihydroxy-2-cyclopenten-1-yl) moiety of the queuosine in the wobble position of the QUC anticodon. This is Glutamyl-Q tRNA(Asp) synthetase from Pseudomonas fluorescens (strain ATCC BAA-477 / NRRL B-23932 / Pf-5).